Consider the following 282-residue polypeptide: Osteoclast-associated immunoglobulin-like receptor (282 aa).

The signal sequence occupies residues 1-18; the sequence is MALVLILQLLTLWPLCHT. Ig-like domains lie at 22 to 116 and 126 to 219; these read PSVP…SQPS and ELPR…SWEG. Residue asparagine 48 is glycosylated (N-linked (GlcNAc...) asparagine). Cysteine 53 and cysteine 100 are joined by a disulfide. N-linked (GlcNAc...) asparagine glycosylation is present at asparagine 145. The interval 221–282 is disordered; it reads GPEARPASSA…PAPPPSDPGV (62 aa). A compositionally biased stretch (pro residues) spans 273 to 282; sequence PAPPPSDPGV.

It belongs to the leukocyte receptor complex/polymeric immunoglobulin receptor (PIR/LRC) family.

The protein localises to the secreted. It localises to the cell membrane. In terms of biological role, regulator of osteoclastogenesis which plays an important bone-specific function in osteoclast differentiation. This chain is Osteoclast-associated immunoglobulin-like receptor (OSCAR), found in Homo sapiens (Human).